Reading from the N-terminus, the 94-residue chain is Co-chaperonin GroES (94 aa).

Belongs to the GroES chaperonin family. Heptamer of 7 subunits arranged in a ring. Interacts with the chaperonin GroEL.

The protein localises to the cytoplasm. Functionally, together with the chaperonin GroEL, plays an essential role in assisting protein folding. The GroEL-GroES system forms a nano-cage that allows encapsulation of the non-native substrate proteins and provides a physical environment optimized to promote and accelerate protein folding. GroES binds to the apical surface of the GroEL ring, thereby capping the opening of the GroEL channel. The polypeptide is Co-chaperonin GroES (Desulfitobacterium hafniense (strain DSM 10664 / DCB-2)).